The following is a 62-amino-acid chain: Small EDRK-rich factor 1 (62 aa).

Basic and acidic residues-rich tracts occupy residues 1-30 (MARGNQREIARQKNMKKTQEISKGKRKEDS) and 50-62 (IANEKKSMQTTEK). A disordered region spans residues 1–62 (MARGNQREIA…EKKSMQTTEK (62 aa)).

It belongs to the SERF family. As to quaternary structure, interacts with SNCA; this interaction promotes the aggregation of SNCA. Expressed in brain (at protein level). Highly expressed in the testis.

The protein localises to the cytoplasm. The protein resides in the cytosol. It localises to the nucleus. Its function is as follows. Positive regulator of amyloid protein aggregation and proteotoxicity. Induces conformational changes in amyloid proteins, such as APP, HTT, and SNCA, driving them into compact formations preceding the formation of aggregates. This is Small EDRK-rich factor 1 (Serf1) from Mus musculus (Mouse).